A 420-amino-acid chain; its full sequence is MTVSEKIFSKASGTPVKAGDFVLANIDLAMTHDITGPLAVQGFYEIMRDEEDKKVWDPSKIVIIFDHQVPADSINAAQNHIMLRKFAKEQGILNYDVYEGVCHQVLPEKGHVKPGDLIVGSDSHTCAYGSLGAFSTGIGSTDMAAVFATGKLWFRVPETFRFEVEGKLPERVYSKDLILHLIGDVGVEGVRYMAAEYAGSTIRSLSIPERMTMSNMAIEMGGKAGIIEADEVTEAYLKERIPGFKLDPYWKSDEGAKYLDIRYYDVSDLEPQVACPHNVDNVKPVSEVEGTKLDQIFMGSCTNGRFEDIKIMADIMGDEPVAKNLRLLVVPASKTEYMKLLKAGYIEKLVNAGAIVEAPCCGPCMGGSFGLLGPGEVGLATSNRNFKGREGSAESFVYLSSPATAGASALTGEITDPRKV.

Positions 301, 361, and 364 each coordinate [4Fe-4S] cluster.

The protein belongs to the aconitase/IPM isomerase family. LeuC type 2 subfamily. Heterodimer of LeuC and LeuD. Requires [4Fe-4S] cluster as cofactor.

The enzyme catalyses (2R,3S)-3-isopropylmalate = (2S)-2-isopropylmalate. It participates in amino-acid biosynthesis; L-leucine biosynthesis; L-leucine from 3-methyl-2-oxobutanoate: step 2/4. Its function is as follows. Catalyzes the isomerization between 2-isopropylmalate and 3-isopropylmalate, via the formation of 2-isopropylmaleate. This chain is Probable 3-isopropylmalate dehydratase large subunit, found in Methanosarcina mazei (strain ATCC BAA-159 / DSM 3647 / Goe1 / Go1 / JCM 11833 / OCM 88) (Methanosarcina frisia).